The primary structure comprises 645 residues: Putative galactocerebrosidase (645 aa).

The signal sequence occupies residues 1–16; it reads MFSIFIKIILILPSIA. T87 and W128 together coordinate substrate. N141 carries an N-linked (GlcNAc...) asparagine glycan. Position 171 (N171) interacts with substrate. Residue E172 is the Proton donor/acceptor of the active site. N174 and N193 each carry an N-linked (GlcNAc...) asparagine glycan. E248 serves as the catalytic Nucleophile. A disulfide bond links C261 and C365. N-linked (GlcNAc...) asparagine glycans are attached at residues N274, N395, N411, N532, N616, N620, and N638.

The protein belongs to the glycosyl hydrolase 59 family.

It carries out the reaction a beta-D-Gal-(1&lt;-&gt;1')-ceramide + H2O = an N-acyl-sphingoid base + D-galactose. It catalyses the reaction a beta-D-galactosyl-(1&lt;-&gt;1')-N-acylsphing-4-enine + H2O = an N-acylsphing-4-enine + D-galactose. Functionally, hydrolyzes the galactose ester bonds of galactosylceramide, galactosylsphingoid base, lactosylceramide, and monogalactosyldiglyceride. C.elegans contain specific sphingoid bases, which are unique or different in structure compared to the sphingoid bases found in other animals. Two examples of these distinctive compounds are: 15-methylhexadecasphinganine and 15-methylhexadecasphing-4-enine. The polypeptide is Putative galactocerebrosidase (Caenorhabditis elegans).